Reading from the N-terminus, the 587-residue chain is Phosphatidylinositol-3-phosphatase SAC1 (587 aa).

Over 1-520 (MATAAYEQLK…SPLSVPRDWK (520 aa)) the chain is Cytoplasmic. Positions 122–451 (LNHVLNVDGF…ANACAKQYAG (330 aa)) constitute an SAC domain. An essential for phosphatidylinositol-4-phosphate phosphatase activity region spans residues 452–587 (TGALKTDFTR…PRLVQKEKID (136 aa)). Lys-456 bears the N6-acetyllysine mark. The chain crosses the membrane as a helical span at residues 521 to 541 (FLALPIIMVVAFSMCIICLLM). At 542–548 (AGDTWTE) the chain is on the lumenal side. The helical transmembrane segment at 549 to 569 (TLAYVLFWGVASIGTFFIILY) threads the bilayer. The Cytoplasmic portion of the chain corresponds to 570–587 (NGKDFVDAPRLVQKEKID).

Interacts with TMEM39A. Interacts with SEC23A and SEC24A; this interaction is reduced in the absence of TMEM39A. Interacts with PLEKHA3 and VAPA and/or VAPB to form a ternary complex.

The protein localises to the endoplasmic reticulum membrane. It is found in the golgi apparatus membrane. It carries out the reaction a 1,2-diacyl-sn-glycero-3-phospho-(1D-myo-inositol-3-phosphate) + H2O = a 1,2-diacyl-sn-glycero-3-phospho-(1D-myo-inositol) + phosphate. The catalysed reaction is a 1,2-diacyl-sn-glycero-3-phospho-(1D-myo-inositol 4-phosphate) + H2O = a 1,2-diacyl-sn-glycero-3-phospho-(1D-myo-inositol) + phosphate. Functionally, phosphoinositide phosphatase which catalyzes the hydrolysis of phosphatidylinositol 4-phosphate (PtdIns(4)P), phosphatidylinositol 3-phosphate (PtdIns(3)P) and has low activity towards phosphatidylinositol-3,5-bisphosphate (PtdIns(3,5)P2). Shows a very robust PtdIns(4)P phosphatase activity when it binds PtdIns(4)P in a 'cis' configuration in the cellular environment, with much less activity seen when it binds PtdIns(4)P in 'trans' configuration. PtdIns(4)P phosphatase activity (when it binds PtdIns(4)P in 'trans' configuration) is enhanced in the presence of PLEKHA3. This is Phosphatidylinositol-3-phosphatase SAC1 (SACM1L) from Pongo abelii (Sumatran orangutan).